The sequence spans 351 residues: Nitronate monooxygenase (351 aa).

FMN-binding positions include L21, N69, Q176, G181, G218, and 237–240; that span reads QMGT.

This sequence belongs to the nitronate monooxygenase family. NMO class I subfamily. FMN is required as a cofactor.

The enzyme catalyses 3 propionate 3-nitronate + 3 O2 + H2O = 3 3-oxopropanoate + 2 nitrate + nitrite + H2O2 + 3 H(+). In terms of biological role, nitronate monooxygenase that uses molecular oxygen to catalyze the oxidative denitrification of alkyl nitronates. The toxin propionate 3-nitronate (P3N) is the best substrate (and the presumed physiological substrate), but this enzyme is also active on other primary and secondary nitronates such as propyl-1-nitronate, ethylnitronate, pentyl-1-nitronate, butyl-1-nitronate and propyl-2-nitronate. Is likely involved in the degradation of P3N, that allows P.aeruginosa PAO1 to grow on 3-nitropropionate/P3N as the sole nitrogen source. Also functions in the detoxification of P3N, a metabolic poison produced by plants and fungi as a defense mechanism. Cannot oxidize nitroalkanes such as 3-nitropropionate, nitroethane, 1-nitropropane, 1-nitrobutane, 1-nitropentane, or 2-nitropropane. The polypeptide is Nitronate monooxygenase (Pseudomonas aeruginosa (strain ATCC 15692 / DSM 22644 / CIP 104116 / JCM 14847 / LMG 12228 / 1C / PRS 101 / PAO1)).